The following is a 456-amino-acid chain: tRNA (guanine(37)-N(1))-methyltransferase (456 aa).

Residues H246, 284–285 (DL), 310–311 (DG), and N336 contribute to the S-adenosyl-L-methionine site.

This sequence belongs to the class I-like SAM-binding methyltransferase superfamily. TRM5/TYW2 family. In terms of assembly, monomer.

The protein localises to the mitochondrion matrix. It localises to the nucleus. Its subcellular location is the cytoplasm. The catalysed reaction is guanosine(37) in tRNA + S-adenosyl-L-methionine = N(1)-methylguanosine(37) in tRNA + S-adenosyl-L-homocysteine + H(+). Specifically methylates the N1 position of guanosine-37 in various cytoplasmic and mitochondrial tRNAs. Methylation is not dependent on the nature of the nucleoside 5' of the target nucleoside. This is the first step in the biosynthesis of wybutosine (yW), a modified base adjacent to the anticodon of tRNAs and required for accurate decoding. The chain is tRNA (guanine(37)-N(1))-methyltransferase from Ciona intestinalis (Transparent sea squirt).